The following is a 307-amino-acid chain: Coproporphyrin III ferrochelatase (307 aa).

Fe-coproporphyrin III is bound by residues tyrosine 12, arginine 29, 45 to 46 (RY), serine 53, and tyrosine 124. 2 residues coordinate Fe(2+): histidine 181 and glutamate 263.

It belongs to the ferrochelatase family.

Its subcellular location is the cytoplasm. The catalysed reaction is Fe-coproporphyrin III + 2 H(+) = coproporphyrin III + Fe(2+). Its pathway is porphyrin-containing compound metabolism; protoheme biosynthesis. Involved in coproporphyrin-dependent heme b biosynthesis. Catalyzes the insertion of ferrous iron into coproporphyrin III to form Fe-coproporphyrin III. This is Coproporphyrin III ferrochelatase from Staphylococcus aureus (strain MRSA252).